The sequence spans 56 residues: Small ribosomal subunit protein uS14B (56 aa).

Positions 21 and 24 each coordinate Zn(2+). A Phosphoserine modification is found at Ser-25. Zn(2+) contacts are provided by Cys-39 and Cys-42.

Belongs to the universal ribosomal protein uS14 family. In terms of assembly, component of the small ribosomal subunit (SSU). Mature yeast ribosomes consist of a small (40S) and a large (60S) subunit. The 40S small subunit contains 1 molecule of ribosomal RNA (18S rRNA) and 33 different proteins (encoded by 57 genes). The large 60S subunit contains 3 rRNA molecules (25S, 5.8S and 5S rRNA) and 46 different proteins (encoded by 81 genes). Requires Zn(2+) as cofactor.

The protein resides in the cytoplasm. Functionally, component of the ribosome, a large ribonucleoprotein complex responsible for the synthesis of proteins in the cell. The small ribosomal subunit (SSU) binds messenger RNAs (mRNAs) and translates the encoded message by selecting cognate aminoacyl-transfer RNA (tRNA) molecules. The large subunit (LSU) contains the ribosomal catalytic site termed the peptidyl transferase center (PTC), which catalyzes the formation of peptide bonds, thereby polymerizing the amino acids delivered by tRNAs into a polypeptide chain. The nascent polypeptides leave the ribosome through a tunnel in the LSU and interact with protein factors that function in enzymatic processing, targeting, and the membrane insertion of nascent chains at the exit of the ribosomal tunnel. This Saccharomyces cerevisiae (strain ATCC 204508 / S288c) (Baker's yeast) protein is Small ribosomal subunit protein uS14B.